The chain runs to 85 residues: Cytochrome c6 (85 aa).

Positions 14, 17, 18, and 58 each coordinate heme c.

The protein belongs to the cytochrome c family. PetJ subfamily. Monomer. In terms of processing, binds 1 heme c group covalently per subunit.

The protein resides in the plastid. The protein localises to the chloroplast thylakoid lumen. Its function is as follows. Functions as an electron carrier between membrane-bound cytochrome b6-f and photosystem I in oxygenic photosynthesis. This chain is Cytochrome c6 (petJ), found in Pyropia tenera (Nori).